We begin with the raw amino-acid sequence, 377 residues long: Carbonic anhydrase 1 (377 aa).

The signal sequence occupies residues methionine 1–alanine 20. One can recognise an Alpha-carbonic anhydrase domain in the interval aspartate 38 to histidine 318. 3 disulfides stabilise this stretch: cysteine 61-cysteine 264, cysteine 194-cysteine 198, and cysteine 296-cysteine 351. A glycan (N-linked (GlcNAc...) asparagine) is linked at asparagine 101. The Proton acceptor role is filled by histidine 112. A glycan (N-linked (GlcNAc...) asparagine) is linked at asparagine 135. Zn(2+)-binding residues include histidine 163, histidine 165, and histidine 182. Substrate contacts are provided by residues threonine 260 and threonine 260–threonine 261. Asparagine 297 carries an N-linked (GlcNAc...) asparagine glycan.

This sequence belongs to the alpha-carbonic anhydrase family. Tetramer of two large and two small subunits linked by two disulfide bonds. Zn(2+) is required as a cofactor.

The protein resides in the periplasm. The enzyme catalyses hydrogencarbonate + H(+) = CO2 + H2O. Reversible hydration of carbon dioxide. The polypeptide is Carbonic anhydrase 1 (CAH1) (Chlamydomonas reinhardtii (Chlamydomonas smithii)).